The following is a 231-amino-acid chain: Protein HHL1, chloroplastic (231 aa).

Residues 1–39 (MEVSMSLNALTRLPLKNTGRFEEVGLARHSLFSSRTACR) constitute a chloroplast transit peptide. Residues 93 to 113 (YLWYPLSIIAGGTTAKIMVAA) traverse the membrane as a helical segment. The disordered stretch occupies residues 206 to 231 (SFGKLSSLNPGSDEKTEETSDEKAKA). The segment covering 217–231 (SDEKTEETSDEKAKA) has biased composition (basic and acidic residues).

As to quaternary structure, interacts with psbB, psbC and LQY1, but not with psbA or psbD.

The protein resides in the plastid. Its subcellular location is the chloroplast thylakoid membrane. Involved in photoprotection. Forms a complex with LQY1 that is involved in the repair and reassembly cycle of the PSII-LHCII supercomplex under high-light conditions. May function in guiding the release of psbC from PSII core monomers. The sequence is that of Protein HHL1, chloroplastic from Arabidopsis thaliana (Mouse-ear cress).